The primary structure comprises 60 residues: Large ribosomal subunit protein bL33 (60 aa).

It belongs to the bacterial ribosomal protein bL33 family.

The chain is Large ribosomal subunit protein bL33 from Chlorobium chlorochromatii (strain CaD3).